Consider the following 80-residue polypeptide: Small ribosomal subunit protein bS18 (80 aa).

It belongs to the bacterial ribosomal protein bS18 family. In terms of assembly, part of the 30S ribosomal subunit. Forms a tight heterodimer with protein bS6.

Binds as a heterodimer with protein bS6 to the central domain of the 16S rRNA, where it helps stabilize the platform of the 30S subunit. The sequence is that of Small ribosomal subunit protein bS18 from Staphylococcus epidermidis (strain ATCC 35984 / DSM 28319 / BCRC 17069 / CCUG 31568 / BM 3577 / RP62A).